Consider the following 430-residue polypeptide: Dihydroorotase (430 aa).

Positions 61 and 63 each coordinate Zn(2+). Substrate is bound by residues 63-65 (HLR) and Asn-95. Zn(2+) contacts are provided by Asp-153, His-180, and His-233. Asn-279 contributes to the substrate binding site. Asp-306 is a binding site for Zn(2+). Residue Asp-306 is part of the active site. Residues His-310 and 324 to 325 (FG) each bind substrate.

This sequence belongs to the metallo-dependent hydrolases superfamily. DHOase family. Class I DHOase subfamily. Requires Zn(2+) as cofactor.

It carries out the reaction (S)-dihydroorotate + H2O = N-carbamoyl-L-aspartate + H(+). It functions in the pathway pyrimidine metabolism; UMP biosynthesis via de novo pathway; (S)-dihydroorotate from bicarbonate: step 3/3. In terms of biological role, catalyzes the reversible cyclization of carbamoyl aspartate to dihydroorotate. The protein is Dihydroorotase of Lactiplantibacillus plantarum (strain ATCC BAA-793 / NCIMB 8826 / WCFS1) (Lactobacillus plantarum).